We begin with the raw amino-acid sequence, 371 residues long: Cytochrome b (371 aa).

The next 4 helical transmembrane spans lie at 25–45, 69–90, 105–125, and 170–190; these read FGSM…FLAV, WMMQ…YIHI, WLSG…GYVL, and FFAL…LHIM. Positions 75 and 89 each coordinate heme b. Heme b contacts are provided by histidine 174 and histidine 188. An a ubiquinone-binding site is contributed by histidine 193. A run of 4 helical transmembrane segments spans residues 218–238, 280–300, 312–332, and 339–358; these read YKDL…VSFL, LWGA…PFTH, IMQL…WAAT, and FTMI…IMNP.

It belongs to the cytochrome b family. As to quaternary structure, the cytochrome bc1 complex contains 3 respiratory subunits (MT-CYB, CYC1 and UQCRFS1), 2 core proteins (UQCRC1 and UQCRC2) and probably 6 low-molecular weight proteins. The cofactor is heme b.

It localises to the mitochondrion inner membrane. Component of the ubiquinol-cytochrome c reductase complex (complex III or cytochrome b-c1 complex) that is part of the mitochondrial respiratory chain. The b-c1 complex mediates electron transfer from ubiquinol to cytochrome c. Contributes to the generation of a proton gradient across the mitochondrial membrane that is then used for ATP synthesis. This Eryx miliaris nogaiorum (Black sand boa) protein is Cytochrome b (MT-CYB).